A 236-amino-acid polypeptide reads, in one-letter code: Ribose-5-phosphate isomerase A (236 aa).

Substrate is bound by residues Thr28–Thr31, Asp83–Asp86, and Lys96–Gly99. Glu105 functions as the Proton acceptor in the catalytic mechanism. Lys123 provides a ligand contact to substrate.

It belongs to the ribose 5-phosphate isomerase family. In terms of assembly, homodimer.

It carries out the reaction aldehydo-D-ribose 5-phosphate = D-ribulose 5-phosphate. It functions in the pathway carbohydrate degradation; pentose phosphate pathway; D-ribose 5-phosphate from D-ribulose 5-phosphate (non-oxidative stage): step 1/1. Functionally, catalyzes the reversible conversion of ribose-5-phosphate to ribulose 5-phosphate. The chain is Ribose-5-phosphate isomerase A from Afipia carboxidovorans (strain ATCC 49405 / DSM 1227 / KCTC 32145 / OM5) (Oligotropha carboxidovorans).